A 313-amino-acid polypeptide reads, in one-letter code: Serine/threonine-protein phosphatase PP2A-4 catalytic subunit (313 aa).

Residues aspartate 61, histidine 63, aspartate 89, and asparagine 121 each contribute to the Mn(2+) site. Histidine 122 functions as the Proton donor in the catalytic mechanism. 2 residues coordinate Mn(2+): histidine 171 and histidine 245. The residue at position 313 (leucine 313) is a Leucine methyl ester.

Belongs to the PPP phosphatase family. PP-2A subfamily. PP2A consists of a common heterodimeric core enzyme, composed of a 36 kDa catalytic subunit (subunit C) and a 65 kDa constant regulatory subunit (subunit A), that associates with a variety of regulatory subunits such as subunits B (the R2/B/PR55/B55, R3/B''/PR72/PR130/PR59 and R5/B'/B56 families). Interacts with SIC/RON3. Mn(2+) serves as cofactor. In terms of processing, reversibly methyl esterified on Leu-313 by leucine carboxyl methyltransferase 1 (LCMT1) and pectin methylesterase 1 (PME1). Carboxyl methylation influences the affinity of the catalytic subunit for the different regulatory subunits, thereby modulating the PP2A holoenzyme's substrate specificity, enzyme activity and cellular localization. Post-translationally, phosphorylation of either threonine (by autophosphorylation-activated protein kinase) or tyrosine results in inactivation of the phosphatase. Auto-dephosphorylation has been suggested as a mechanism for reactivation.

Its subcellular location is the cytoplasm. It carries out the reaction O-phospho-L-seryl-[protein] + H2O = L-seryl-[protein] + phosphate. The enzyme catalyses O-phospho-L-threonyl-[protein] + H2O = L-threonyl-[protein] + phosphate. Functions redundantly with PP2A3, and is involved in establishing auxin gradients, apical-basal axis of polarity and root and shoot apical meristem during embryogenesis. May dephosphorylate PIN1 and regulate its subcellular distribution for polar auxin transport. The holoenzyme composed of PP2AA1, PP2A4 and B'ZETA or B'ETA acts as a negative regulator of plant innate immunity by controlling BAK1 phosphorylation state and activation in surface-localized immune receptor complexes. The protein is Serine/threonine-protein phosphatase PP2A-4 catalytic subunit of Arabidopsis thaliana (Mouse-ear cress).